The primary structure comprises 196 residues: Ribosome maturation factor RimP (196 aa).

It belongs to the RimP family.

It is found in the cytoplasm. Required for maturation of 30S ribosomal subunits. In Dinoroseobacter shibae (strain DSM 16493 / NCIMB 14021 / DFL 12), this protein is Ribosome maturation factor RimP.